Here is a 732-residue protein sequence, read N- to C-terminus: 1,4-alpha-glucan branching enzyme GlgB (732 aa).

Asp-408 functions as the Nucleophile in the catalytic mechanism. The Proton donor role is filled by Glu-461.

This sequence belongs to the glycosyl hydrolase 13 family. GlgB subfamily. In terms of assembly, monomer.

It catalyses the reaction Transfers a segment of a (1-&gt;4)-alpha-D-glucan chain to a primary hydroxy group in a similar glucan chain.. It functions in the pathway glycan biosynthesis; glycogen biosynthesis. In terms of biological role, catalyzes the formation of the alpha-1,6-glucosidic linkages in glycogen by scission of a 1,4-alpha-linked oligosaccharide from growing alpha-1,4-glucan chains and the subsequent attachment of the oligosaccharide to the alpha-1,6 position. The chain is 1,4-alpha-glucan branching enzyme GlgB from Rhodococcus jostii (strain RHA1).